Here is a 380-residue protein sequence, read N- to C-terminus: Actin-like protein (380 aa).

Belongs to the actin family. ARP1 subfamily.

It localises to the cytoplasm. It is found in the cytoskeleton. In terms of biological role, involved in nuclear migration. May function as a component of the dynactin complex which activates force generation by cytoplasmic dynein. The polypeptide is Actin-like protein (ro-4) (Neurospora crassa (strain ATCC 24698 / 74-OR23-1A / CBS 708.71 / DSM 1257 / FGSC 987)).